A 101-amino-acid chain; its full sequence is NAD(P)H-quinone oxidoreductase subunit 4L, chloroplastic (101 aa).

Helical transmembrane passes span 2-22 (MLEY…YGLI), 32-52 (MCLE…SDFF), and 61-81 (ILSI…PAIV).

The protein belongs to the complex I subunit 4L family. NDH is composed of at least 16 different subunits, 5 of which are encoded in the nucleus.

The protein resides in the plastid. The protein localises to the chloroplast thylakoid membrane. It catalyses the reaction a plastoquinone + NADH + (n+1) H(+)(in) = a plastoquinol + NAD(+) + n H(+)(out). The catalysed reaction is a plastoquinone + NADPH + (n+1) H(+)(in) = a plastoquinol + NADP(+) + n H(+)(out). NDH shuttles electrons from NAD(P)H:plastoquinone, via FMN and iron-sulfur (Fe-S) centers, to quinones in the photosynthetic chain and possibly in a chloroplast respiratory chain. The immediate electron acceptor for the enzyme in this species is believed to be plastoquinone. Couples the redox reaction to proton translocation, and thus conserves the redox energy in a proton gradient. The sequence is that of NAD(P)H-quinone oxidoreductase subunit 4L, chloroplastic from Populus alba (White poplar).